Reading from the N-terminus, the 167-residue chain is Endoribonuclease YbeY (167 aa).

Zn(2+) is bound by residues H132, H136, and H142.

The protein belongs to the endoribonuclease YbeY family. It depends on Zn(2+) as a cofactor.

It localises to the cytoplasm. In terms of biological role, single strand-specific metallo-endoribonuclease involved in late-stage 70S ribosome quality control and in maturation of the 3' terminus of the 16S rRNA. In Clostridium beijerinckii (strain ATCC 51743 / NCIMB 8052) (Clostridium acetobutylicum), this protein is Endoribonuclease YbeY.